The sequence spans 545 residues: MPTNLHAWNALQQHHDAIRDHQMADWFAENGADRVRQFSLEAAGLYLDYSKNRITPQTMQLLLQLADEAGVPARRDAMFAGEHINATEDRAALHVALRATAGAGFKVDGVPVVPAIQNVLVRMRAFSEAVRSGAWTGTTGERITDVVNIGIGGSDLGPKMVCRALSHLAHDDGHSGPRMHFVSNVDGTELAEALERLDPRRTLMIVCSKTFTTLETMANAHSARQWYLDNGVAEDQLARHFVAVSTNVDAVRAFGIDPANMFEFWDWIGGRFSLWSSVGLSTALAVGFNAFADLLAGGRAMDEHFRTAPLERNMPVVLGMLGIWYRNFFNLPTSCMAPYSTSLELFPAFLQQLEMESNGKTVQLNGRRVRTHTSPVVWGTAGTNGQHAYFQMIHQGSQIVPVDFVAPLVPPRELPGHHAKLLANCFAQAEALMRGRSAEELRAAGMTDELRIAHMVFEGNRPSNTLLMEDLTPHVLGALIALYEHRTFVQGVVWNINSFDQWGVELGKILARPIESELNGAQAGSHDASTAALIARARGVLARNG.

The active-site Proton donor is E356. Residues H387 and K508 contribute to the active site.

It belongs to the GPI family.

The protein localises to the cytoplasm. It carries out the reaction alpha-D-glucose 6-phosphate = beta-D-fructose 6-phosphate. It participates in carbohydrate biosynthesis; gluconeogenesis. Its pathway is carbohydrate degradation; glycolysis; D-glyceraldehyde 3-phosphate and glycerone phosphate from D-glucose: step 2/4. Catalyzes the reversible isomerization of glucose-6-phosphate to fructose-6-phosphate. This is Glucose-6-phosphate isomerase 1 from Cupriavidus pinatubonensis (strain JMP 134 / LMG 1197) (Cupriavidus necator (strain JMP 134)).